The sequence spans 384 residues: H-2 class I histocompatibility antigen, TLA(B) alpha chain (384 aa).

The N-terminal stretch at 1-26 (MRMGTPVPGTLLILLAASQGQTQTCP) is a signal peptide. The alpha-1 stretch occupies residues 27 to 116 (GSHSLRYFYT…MLDYYNLSQN (90 aa)). The Extracellular segment spans residues 27 to 314 (GSHSLRYFYT…TSMPNRTTVR (288 aa)). 3 N-linked (GlcNAc...) asparagine glycosylation sites follow: Asn-63, Asn-112, and Asn-116. The alpha-2 stretch occupies residues 117–208 (GSHTIQVMYG…ENRKKTQECT (92 aa)). Intrachain disulfides connect Cys-127-Cys-190 and Cys-229-Cys-285. The alpha-3 stretch occupies residues 209 to 300 (DPPKTHVTHH…GLPEPLTLRW (92 aa)). One can recognise an Ig-like C1-type domain in the interval 211-299 (PKTHVTHHPR…EGLPEPLTLR (89 aa)). The segment at 301–314 (EPPQTSMPNRTTVR) is connecting peptide. N-linked (GlcNAc...) asparagine glycosylation is present at Asn-309. The helical transmembrane segment at 315–334 (ALLGAMIILGFMSGSVMMWM) threads the bilayer. The Cytoplasmic segment spans residues 335-384 (RKNNGGNGDDNTAAYQNEREHLSLDPRAESEALGVEAGMKDLPSAPPLVS). Positions 354-364 (EHLSLDPRAES) are enriched in basic and acidic residues. The segment at 354–384 (EHLSLDPRAESEALGVEAGMKDLPSAPPLVS) is disordered.

It belongs to the MHC class I family. Heterodimer of an alpha chain and a beta chain (beta-2-microglobulin). As to expression, TL antigens are only expressed on thymocytes, activated T-lymphocytes and on some thymic leukemias.

Its subcellular location is the membrane. Its function is as follows. Involved in the presentation of foreign antigens to the immune system. The chain is H-2 class I histocompatibility antigen, TLA(B) alpha chain (H2-T3) from Mus musculus (Mouse).